Consider the following 114-residue polypeptide: T cell receptor alpha variable 24 (114 aa).

An N-terminal signal peptide occupies residues 1-22; sequence MEKNPLAAPLLILWFHLDCVSS. The Ig-like domain occupies 23–114; it reads ILNVEQSPQS…EDSATYLCAF (92 aa). Asparagine 42 is a glycosylation site (N-linked (GlcNAc...) asparagine). Residues cysteine 45 and cysteine 112 are joined by a disulfide bond.

Alpha-beta TR is a heterodimer composed of an alpha and beta chain; disulfide-linked. The alpha-beta TR is associated with the transmembrane signaling CD3 coreceptor proteins to form the TR-CD3 (TcR or TCR). The assembly of alpha-beta TR heterodimers with CD3 occurs in the endoplasmic reticulum where a single alpha-beta TR heterodimer associates with one CD3D-CD3E heterodimer, one CD3G-CD3E heterodimer and one CD247 homodimer forming a stable octameric structure. CD3D-CD3E and CD3G-CD3E heterodimers preferentially associate with TR alpha and TR beta chains, respectively. The association of the CD247 homodimer is the last step of TcR assembly in the endoplasmic reticulum and is required for transport to the cell surface.

It localises to the cell membrane. Functionally, v region of the variable domain of T cell receptor (TR) alpha chain that participates in the antigen recognition. Alpha-beta T cell receptors are antigen specific receptors which are essential to the immune response and are present on the cell surface of T lymphocytes. Recognize peptide-major histocompatibility (MH) (pMH) complexes that are displayed by antigen presenting cells (APC), a prerequisite for efficient T cell adaptive immunity against pathogens. Binding of alpha-beta TR to pMH complex initiates TR-CD3 clustering on the cell surface and intracellular activation of LCK that phosphorylates the ITAM motifs of CD3G, CD3D, CD3E and CD247 enabling the recruitment of ZAP70. In turn ZAP70 phosphorylates LAT, which recruits numerous signaling molecules to form the LAT signalosome. The LAT signalosome propagates signal branching to three major signaling pathways, the calcium, the mitogen-activated protein kinase (MAPK) kinase and the nuclear factor NF-kappa-B (NF-kB) pathways, leading to the mobilization of transcription factors that are critical for gene expression and essential for T cell growth and differentiation. The T cell repertoire is generated in the thymus, by V-(D)-J rearrangement. This repertoire is then shaped by intrathymic selection events to generate a peripheral T cell pool of self-MH restricted, non-autoaggressive T cells. Post-thymic interaction of alpha-beta TR with the pMH complexes shapes TR structural and functional avidity. The sequence is that of T cell receptor alpha variable 24 from Homo sapiens (Human).